Reading from the N-terminus, the 429-residue chain is Glucose-1-phosphate adenylyltransferase (429 aa).

Alpha-D-glucose 1-phosphate contacts are provided by residues Gly-162, Glu-177–Lys-178, and Ser-209.

Belongs to the bacterial/plant glucose-1-phosphate adenylyltransferase family. As to quaternary structure, homotetramer.

It catalyses the reaction alpha-D-glucose 1-phosphate + ATP + H(+) = ADP-alpha-D-glucose + diphosphate. It participates in glycan biosynthesis; glycogen biosynthesis. Involved in the biosynthesis of ADP-glucose, a building block required for the elongation reactions to produce glycogen. Catalyzes the reaction between ATP and alpha-D-glucose 1-phosphate (G1P) to produce pyrophosphate and ADP-Glc. The protein is Glucose-1-phosphate adenylyltransferase of Trichormus variabilis (strain ATCC 29413 / PCC 7937) (Anabaena variabilis).